Reading from the N-terminus, the 1159-residue chain is Protocadherin-17 (1159 aa).

Positions Met1–Thr17 are cleaved as a signal peptide. 6 Cadherin domains span residues Leu18–Phe132, Ser133–Phe243, Glu244–Ile351, Phe353–Phe472, Thr473–Ile583, and Gln589–Val695. Residues Leu18–Pro707 lie on the Extracellular side of the membrane. A glycan (N-linked (GlcNAc...) asparagine) is linked at Asn22. The Cell attachment site motif lies at Arg186–Asp188. N-linked (GlcNAc...) asparagine glycans are attached at residues Asn266, Asn439, Asn453, Asn504, Asn566, and Asn590. The chain crosses the membrane as a helical span at residues Leu708–Val728. At Lys729–Lys1159 the chain is on the cytoplasmic side. 2 disordered regions span residues Asn858–Cys909 and Ser1108–Ser1132. Polar residues predominate over residues Gly867 to Phe879. Composition is skewed to basic and acidic residues over residues Lys880–Ser895 and Gln1120–Ser1132.

It is found in the cell membrane. Potential calcium-dependent cell-adhesion protein. This Homo sapiens (Human) protein is Protocadherin-17 (PCDH17).